The chain runs to 341 residues: DNA-directed RNA polymerase subunit alpha (341 aa).

An alpha N-terminal domain (alpha-NTD) region spans residues methionine 1–glutamate 233. The interval aspartate 262–aspartate 341 is alpha C-terminal domain (alpha-CTD).

Belongs to the RNA polymerase alpha chain family. In plastids the minimal PEP RNA polymerase catalytic core is composed of four subunits: alpha, beta, beta', and beta''. When a (nuclear-encoded) sigma factor is associated with the core the holoenzyme is formed, which can initiate transcription.

Its subcellular location is the plastid. It localises to the chloroplast. The enzyme catalyses RNA(n) + a ribonucleoside 5'-triphosphate = RNA(n+1) + diphosphate. Its function is as follows. DNA-dependent RNA polymerase catalyzes the transcription of DNA into RNA using the four ribonucleoside triphosphates as substrates. The protein is DNA-directed RNA polymerase subunit alpha of Angiopteris evecta (Mule's foot fern).